An 88-amino-acid polypeptide reads, in one-letter code: Putative septation protein SpoVG (88 aa).

It belongs to the SpoVG family.

Functionally, could be involved in septation. The sequence is that of Putative septation protein SpoVG from Caldicellulosiruptor bescii (strain ATCC BAA-1888 / DSM 6725 / KCTC 15123 / Z-1320) (Anaerocellum thermophilum).